The primary structure comprises 185 residues: ATP synthase subunit delta (185 aa).

This sequence belongs to the ATPase delta chain family. F-type ATPases have 2 components, F(1) - the catalytic core - and F(0) - the membrane proton channel. F(1) has five subunits: alpha(3), beta(3), gamma(1), delta(1), epsilon(1). CF(0) has four main subunits: a(1), b(2) and c(10-14). The alpha and beta chains form an alternating ring which encloses part of the gamma chain. F(1) is attached to F(0) by a central stalk formed by the gamma and epsilon chains, while a peripheral stalk is formed by the delta and b chains.

It localises to the cell membrane. In terms of biological role, f(1)F(0) ATP synthase produces ATP from ADP in the presence of a proton or sodium gradient. F-type ATPases consist of two structural domains, F(1) containing the extramembraneous catalytic core and F(0) containing the membrane proton channel, linked together by a central stalk and a peripheral stalk. During catalysis, ATP synthesis in the catalytic domain of F(1) is coupled via a rotary mechanism of the central stalk subunits to proton translocation. This protein is part of the stalk that links CF(0) to CF(1). It either transmits conformational changes from CF(0) to CF(1) or is implicated in proton conduction. In Heliobacterium modesticaldum (strain ATCC 51547 / Ice1), this protein is ATP synthase subunit delta.